The following is a 154-amino-acid chain: MRCPTCKYNGTRVVDSRPADDGNSIRRRRECEKCGFRFTTFEKVEESPLIVVKKDGAREEFAREKVRRGLIRACEKRPVSAEQIEEIVNEVERELRNIGDSEIASDLIGEKVMNKLASLDEVAYVRFASVYRQFKDISVFVEELKDLMEKNKDR.

A zinc finger spans residues 3 to 34 (CPTCKYNGTRVVDSRPADDGNSIRRRRECEKC). Residues 49–139 (LIVVKKDGAR…VYRQFKDISV (91 aa)) enclose the ATP-cone domain.

It belongs to the NrdR family. The cofactor is Zn(2+).

Functionally, negatively regulates transcription of bacterial ribonucleotide reductase nrd genes and operons by binding to NrdR-boxes. This is Transcriptional repressor NrdR from Listeria innocua serovar 6a (strain ATCC BAA-680 / CLIP 11262).